Here is a 327-residue protein sequence, read N- to C-terminus: ATP-dependent (S)-NAD(P)H-hydrate dehydratase (327 aa).

A YjeF C-terminal domain is found at 11–313 (LLTRVKRIIP…RHVGKAYNAL (303 aa)). Residues Gly-121 and 174–180 (NVIEFKR) each bind (6S)-NADPHX. ATP contacts are provided by residues 209–213 (KGQSD) and 228–237 (GGLKRCGGQG). Position 238 (Asp-238) interacts with (6S)-NADPHX.

The protein belongs to the NnrD/CARKD family. Mg(2+) serves as cofactor.

The protein resides in the cytoplasm. The enzyme catalyses (6S)-NADHX + ATP = ADP + phosphate + NADH + H(+). It catalyses the reaction (6S)-NADPHX + ATP = ADP + phosphate + NADPH + H(+). In terms of biological role, catalyzes the dehydration of the S-form of NAD(P)HX at the expense of ATP, which is converted to ADP. Together with NAD(P)HX epimerase, which catalyzes the epimerization of the S- and R-forms, the enzyme allows the repair of both epimers of NAD(P)HX, a damaged form of NAD(P)H that is a result of enzymatic or heat-dependent hydration. The chain is ATP-dependent (S)-NAD(P)H-hydrate dehydratase from Schizosaccharomyces pombe (strain 972 / ATCC 24843) (Fission yeast).